The sequence spans 217 residues: ATP-dependent Clp protease proteolytic subunit 3 (217 aa).

Low complexity predominate over residues 1–13; it reads MSPFTAGPAPART. Residues 1 to 23 form a disordered region; that stretch reads MSPFTAGPAPARTPRAEEGDTPA. The Nucleophile role is filled by S108. The active site involves H133.

It belongs to the peptidase S14 family. In terms of assembly, fourteen ClpP subunits assemble into 2 heptameric rings which stack back to back to give a disk-like structure with a central cavity, resembling the structure of eukaryotic proteasomes.

Its subcellular location is the cytoplasm. It carries out the reaction Hydrolysis of proteins to small peptides in the presence of ATP and magnesium. alpha-casein is the usual test substrate. In the absence of ATP, only oligopeptides shorter than five residues are hydrolyzed (such as succinyl-Leu-Tyr-|-NHMec, and Leu-Tyr-Leu-|-Tyr-Trp, in which cleavage of the -Tyr-|-Leu- and -Tyr-|-Trp bonds also occurs).. Its function is as follows. Cleaves peptides in various proteins in a process that requires ATP hydrolysis. Has a chymotrypsin-like activity. Plays a major role in the degradation of misfolded proteins. The polypeptide is ATP-dependent Clp protease proteolytic subunit 3 (Streptomyces coelicolor (strain ATCC BAA-471 / A3(2) / M145)).